A 419-amino-acid chain; its full sequence is uncharacterized protein (419 aa).

Belongs to the MT-A70-like family.

The protein resides in the cytoplasm. This is an uncharacterized protein from Schizosaccharomyces pombe (strain 972 / ATCC 24843) (Fission yeast).